A 172-amino-acid chain; its full sequence is Crossover junction endodeoxyribonuclease RuvC (172 aa).

Active-site residues include Asp-7, Glu-68, and Asp-141. Residues Asp-7, Glu-68, and Asp-141 each contribute to the Mg(2+) site.

This sequence belongs to the RuvC family. Homodimer which binds Holliday junction (HJ) DNA. The HJ becomes 2-fold symmetrical on binding to RuvC with unstacked arms; it has a different conformation from HJ DNA in complex with RuvA. In the full resolvosome a probable DNA-RuvA(4)-RuvB(12)-RuvC(2) complex forms which resolves the HJ. Requires Mg(2+) as cofactor.

Its subcellular location is the cytoplasm. The enzyme catalyses Endonucleolytic cleavage at a junction such as a reciprocal single-stranded crossover between two homologous DNA duplexes (Holliday junction).. Functionally, the RuvA-RuvB-RuvC complex processes Holliday junction (HJ) DNA during genetic recombination and DNA repair. Endonuclease that resolves HJ intermediates. Cleaves cruciform DNA by making single-stranded nicks across the HJ at symmetrical positions within the homologous arms, yielding a 5'-phosphate and a 3'-hydroxyl group; requires a central core of homology in the junction. The consensus cleavage sequence is 5'-(A/T)TT(C/G)-3'. Cleavage occurs on the 3'-side of the TT dinucleotide at the point of strand exchange. HJ branch migration catalyzed by RuvA-RuvB allows RuvC to scan DNA until it finds its consensus sequence, where it cleaves and resolves the cruciform DNA. In Frankia casuarinae (strain DSM 45818 / CECT 9043 / HFP020203 / CcI3), this protein is Crossover junction endodeoxyribonuclease RuvC.